Reading from the N-terminus, the 309-residue chain is Tagatose-6-phosphate kinase (309 aa).

This sequence belongs to the carbohydrate kinase PfkB family. LacC subfamily.

It catalyses the reaction D-tagatofuranose 6-phosphate + ATP = D-tagatofuranose 1,6-bisphosphate + ADP + H(+). The protein operates within carbohydrate metabolism; D-tagatose 6-phosphate degradation; D-glyceraldehyde 3-phosphate and glycerone phosphate from D-tagatose 6-phosphate: step 1/2. This Streptococcus pyogenes serotype M1 protein is Tagatose-6-phosphate kinase.